Here is an 885-residue protein sequence, read N- to C-terminus: Insulin receptor substrate 1-A (885 aa).

The 56-residue stretch at 1 to 56 (MNIRRCGHSENFFFIEVGRSAVTGAGEFWMQVDDSVVAQNMHETILEAMKALSDEF) folds into the IRS-type PTB domain. Residues 56–225 (FRPRSKSQSS…GGFISSDEYG (170 aa)) are disordered. 4 stretches are compositionally biased toward low complexity: residues 61 to 75 (KSQS…ISVP), 99 to 109 (SATATSPAGGA), 176 to 197 (SPSA…GSTS), and 205 to 217 (SSAS…SDGG). Phosphoserine is present on Ser104. Tyr257 is modified (phosphotyrosine; by INSR). A YXXM motif 1 motif is present at residues 257–260 (YICM). 2 stretches are compositionally biased toward polar residues: residues 263 to 276 (SSSH…QRYQ) and 296 to 313 (SSGT…PSQS). Disordered stretches follow at residues 263-282 (SSSH…RGEE) and 293-313 (RTHS…PSQS). 5 short sequence motifs (YXXM motif) span residues 318–321 (YTEM), 364–367 (YMPM), 381–384 (YMPM), 409–412 (YMMM), and 451–454 (YINM). Residues Tyr364 and Tyr381 each carry the phosphotyrosine; by INSR modification. The residue at position 409 (Tyr409) is a Phosphotyrosine. Residues 501–581 (NLRISANSGH…LPPEPKSPGE (81 aa)) form a disordered region. Over residues 504 to 515 (ISANSGHNLYTE) the composition is skewed to polar residues. Low complexity predominate over residues 516–526 (DSSSSSTSSDS). Residues Tyr582 and Tyr620 each carry the phosphotyrosine; by INSR modification. The tract at residues 582-584 (YVN) is GRB2-binding. The YXXM motif 7 signature appears at 620–623 (YMNM). Residues 637 to 660 (TSSYEPPNKPVNSVCPTETCSSSR) are compositionally biased toward polar residues. A disordered region spans residues 637 to 665 (TSSYEPPNKPVNSVCPTETCSSSRPPIRG). The residue at position 672 (Tyr672) is a Phosphotyrosine; by INSR. Short sequence motifs (YXXM motif) lie at residues 672–675 (YMSM) and 706–709 (YAEM). A disordered region spans residues 732–803 (ASRSSLLGQG…SGEDVKRHSS (72 aa)). 2 stretches are compositionally biased toward polar residues: residues 743–758 (GPSA…NRNP) and 777–792 (ETFS…TTGP). Tyr834 and Tyr866 each carry phosphotyrosine; by INSR.

In terms of assembly, interacts with the NPXY motif of tyrosine-phosphorylated igf1r and insr via the PTB domain. Binds to phosphatidylinositol 3-kinase p85 subunit at a low level in vitro prior to phosphorylation. Binding is greatly enhanced following tyrosine phosphorylation by insr and probably occurs via the phosphorylated YXXM motifs. Phosphorylation of Tyr-582 is required for grb2-binding.

In terms of biological role, may mediate the control of various cellular processes by insulin. When phosphorylated by the insulin receptor binds specifically to various cellular proteins containing SH2 domains such as phosphatidylinositol 3-kinase p85 subunit or grb2. Activates phosphatidylinositol 3-kinase when bound to the regulatory p85 subunit. In Xenopus laevis (African clawed frog), this protein is Insulin receptor substrate 1-A (irs1-a).